The primary structure comprises 282 residues: Probable endonuclease 4 (282 aa).

Residues His-69, His-109, Glu-144, Asp-178, His-181, His-215, Asp-228, His-230, and Glu-260 each contribute to the Zn(2+) site.

The protein belongs to the AP endonuclease 2 family. The cofactor is Zn(2+).

The catalysed reaction is Endonucleolytic cleavage to 5'-phosphooligonucleotide end-products.. Functionally, endonuclease IV plays a role in DNA repair. It cleaves phosphodiester bonds at apurinic or apyrimidinic (AP) sites, generating a 3'-hydroxyl group and a 5'-terminal sugar phosphate. This Thermosipho africanus (strain TCF52B) protein is Probable endonuclease 4.